Reading from the N-terminus, the 80-residue chain is MTDFTPDAVLDATGLNCPEPVMMLHQHVRNLAAGGLLKVIATDPSTRRDIPKFCNFLGHELLQQQEDAGTFLYWIRKKAD.

Cys-17 (cysteine persulfide intermediate) is an active-site residue.

The protein belongs to the sulfur carrier protein TusA family.

It is found in the cytoplasm. Its function is as follows. Sulfur carrier protein which probably makes part of a sulfur-relay system. The protein is Sulfur carrier protein TusA of Pseudomonas putida (strain GB-1).